We begin with the raw amino-acid sequence, 542 residues long: Chaperonin GroEL (542 aa).

Residues 29-32 (TLGP), 86-90 (DGTTT), Gly413, and Asp494 each bind ATP.

It belongs to the chaperonin (HSP60) family. As to quaternary structure, forms a cylinder of 14 subunits composed of two heptameric rings stacked back-to-back. Interacts with the co-chaperonin GroES.

The protein localises to the cytoplasm. It carries out the reaction ATP + H2O + a folded polypeptide = ADP + phosphate + an unfolded polypeptide.. In terms of biological role, together with its co-chaperonin GroES, plays an essential role in assisting protein folding. The GroEL-GroES system forms a nano-cage that allows encapsulation of the non-native substrate proteins and provides a physical environment optimized to promote and accelerate protein folding. This Endomicrobium trichonymphae protein is Chaperonin GroEL.